A 142-amino-acid polypeptide reads, in one-letter code: Large ribosomal subunit protein bL17 (142 aa).

This sequence belongs to the bacterial ribosomal protein bL17 family. As to quaternary structure, part of the 50S ribosomal subunit. Contacts protein L32.

The polypeptide is Large ribosomal subunit protein bL17 (Chlamydia abortus (strain DSM 27085 / S26/3) (Chlamydophila abortus)).